The sequence spans 416 residues: D-amino acid dehydrogenase (416 aa).

3-17 (ITILGSGVIGVTTAY) is a binding site for FAD.

This sequence belongs to the DadA oxidoreductase family. The cofactor is FAD.

The catalysed reaction is a D-alpha-amino acid + A + H2O = a 2-oxocarboxylate + AH2 + NH4(+). Its pathway is amino-acid degradation; D-alanine degradation; NH(3) and pyruvate from D-alanine: step 1/1. Functionally, oxidative deamination of D-amino acids. The protein is D-amino acid dehydrogenase of Brucella abortus (strain S19).